The following is a 515-amino-acid chain: 1-pyrroline-5-carboxylate dehydrogenase 1 (515 aa).

Active-site residues include Glu286 and Cys320.

Belongs to the aldehyde dehydrogenase family. RocA subfamily.

It catalyses the reaction L-glutamate 5-semialdehyde + NAD(+) + H2O = L-glutamate + NADH + 2 H(+). Its pathway is amino-acid degradation; L-proline degradation into L-glutamate; L-glutamate from L-proline: step 2/2. This is 1-pyrroline-5-carboxylate dehydrogenase 1 (rocA1) from Halalkalibacterium halodurans (strain ATCC BAA-125 / DSM 18197 / FERM 7344 / JCM 9153 / C-125) (Bacillus halodurans).